We begin with the raw amino-acid sequence, 206 residues long: Putative cryptic phosphonate transport system permease protein PhnE1 (206 aa).

The next 3 membrane-spanning stretches (helical) occupy residues 30–50 (WFSL…WQGA), 92–112 (IAVW…LMSA), and 137–157 (MVFA…GVLA).

In terms of assembly, if the reading frame is restored, the complex is composed of two ATP-binding proteins (PhnC), two transmembrane proteins (PhnE) and a solute-binding protein (PhnD).

It localises to the cell inner membrane. In terms of biological role, N-terminal fragment of the PhnE protein, part of a phosphonate usage operon that is cryptic in K12 strains. Growth of K12 strains on phosphonate can be observed when it is used as the sole phosphorus source after a 60 hour lag period, suggesting the operon is activated. An intact PhnE in strain B is (AC A0A140NFA3). Part of the binding-protein-dependent transport system for phosphonates; probably responsible for the translocation of the substrate across the membrane. This Escherichia coli (strain K12) protein is Putative cryptic phosphonate transport system permease protein PhnE1 (phnE1).